An 874-amino-acid polypeptide reads, in one-letter code: Alanine--tRNA ligase (874 aa).

Zn(2+)-binding residues include His563, His567, Cys665, and His669.

Belongs to the class-II aminoacyl-tRNA synthetase family. Zn(2+) is required as a cofactor.

The protein resides in the cytoplasm. It catalyses the reaction tRNA(Ala) + L-alanine + ATP = L-alanyl-tRNA(Ala) + AMP + diphosphate. Catalyzes the attachment of alanine to tRNA(Ala) in a two-step reaction: alanine is first activated by ATP to form Ala-AMP and then transferred to the acceptor end of tRNA(Ala). Also edits incorrectly charged Ser-tRNA(Ala) and Gly-tRNA(Ala) via its editing domain. The polypeptide is Alanine--tRNA ligase (Haemophilus influenzae (strain ATCC 51907 / DSM 11121 / KW20 / Rd)).